The following is a 170-amino-acid chain: Photosystem I assembly protein Ycf3 (170 aa).

TPR repeat units follow at residues 35 to 68 (AFTYYRDGMLAQSEGNYAEALQNYYEATRLEIDP), 72 to 105 (SYILYNIGLIHTSNGEHTKALEYYFRALERNPFL), and 120 to 153 (GEQAILQGDSEIAEAWFDQAAEYWKQAIALTPGN).

This sequence belongs to the Ycf3 family.

The protein resides in the plastid. The protein localises to the chloroplast thylakoid membrane. In terms of biological role, essential for the assembly of the photosystem I (PSI) complex. May act as a chaperone-like factor to guide the assembly of the PSI subunits. This chain is Photosystem I assembly protein Ycf3, found in Agrostis stolonifera (Creeping bentgrass).